Consider the following 158-residue polypeptide: Transcription elongation factor GreA (158 aa).

Residues 53 to 73 are a coiled coil; the sequence is EQQGMVEARIRDIEAKLSNAQ.

Belongs to the GreA/GreB family.

Its function is as follows. Necessary for efficient RNA polymerase transcription elongation past template-encoded arresting sites. The arresting sites in DNA have the property of trapping a certain fraction of elongating RNA polymerases that pass through, resulting in locked ternary complexes. Cleavage of the nascent transcript by cleavage factors such as GreA or GreB allows the resumption of elongation from the new 3'terminus. GreA releases sequences of 2 to 3 nucleotides. This is Transcription elongation factor GreA from Pseudomonas aeruginosa (strain ATCC 15692 / DSM 22644 / CIP 104116 / JCM 14847 / LMG 12228 / 1C / PRS 101 / PAO1).